A 542-amino-acid chain; its full sequence is Polysialoglycoprotein (542 aa).

The signal sequence occupies residues 1–21 (MIMGGVRELLLVVMTVGVVKV). Residues 22-120 (SCYPVGKSQK…TSEAATGPSG (99 aa)) constitute a propeptide that is removed on maturation. The tract at residues 70 to 542 (EEYLETNEVE…GPSGDDAMDI (473 aa)) is disordered. Positions 78–95 (VESQASPNHGSSPANDAL) are enriched in polar residues. Residues 97-106 (SEEKLRRVSS) are compositionally biased toward basic and acidic residues. Residues 107-116 (DDAATSEAAT) are compositionally biased toward low complexity. Repeat copies occupy residues 121 to 133 (DDAT…GPSG), 134 to 146 (DDAT…GPSG), 147 to 159 (DDAT…GPSG), 160 to 172 (DDAT…GPSG), 173 to 185 (DDAT…GPSG), 186 to 198 (DDAT…GPSG), 199 to 211 (DDAT…GPSG), 212 to 224 (DDAT…GPSG), 225 to 237 (DDAT…GPSG), 238 to 250 (DDAT…GPSG), 251 to 263 (DDAT…GPSG), 264 to 276 (DDAT…GPSG), 277 to 289 (DDAT…GPSG), 290 to 302 (DDAT…GPSG), 303 to 315 (DDAT…GPSG), 316 to 328 (DDAT…GPSG), 329 to 341 (DDAT…GPSG), 342 to 354 (DDAT…GPSG), 355 to 367 (DDAT…GPSG), 368 to 380 (DDAT…GPSG), 381 to 393 (DDAT…GPSG), 394 to 406 (DDAT…GPSG), 407 to 419 (DDAT…GPSG), 420 to 432 (DDAT…GPSG), 433 to 445 (DDAT…GPSG), 446 to 458 (DDAT…GPSG), 459 to 471 (DDAT…GPSG), 472 to 484 (DDAT…GPSG), 485 to 497 (DDAT…GPSG), 498 to 510 (DDAT…GPSG), 511 to 523 (DDAT…GPSG), and 524 to 536 (DDAT…GPSG). The interval 121 to 536 (DDATSEAATG…TSEAATGPSG (416 aa)) is 32 X 13 AA tandem repeats of D-D-A-T-S-E-A-A-T-G-P-S-G. A glycan (O-linked (GalNAc...) threonine) is linked at T124. S125 is a glycosylation site (O-linked (GalNAc...) serine). 2 O-linked (GalNAc...) threonine glycosylation sites follow: T129 and T137. S138 carries an O-linked (GalNAc...) serine glycan. 2 O-linked (GalNAc...) threonine glycosylation sites follow: T142 and T150. S151 is a glycosylation site (O-linked (GalNAc...) serine). Residues T155 and T163 are each glycosylated (O-linked (GalNAc...) threonine). A glycan (O-linked (GalNAc...) serine) is linked at S164. T168 and T176 each carry an O-linked (GalNAc...) threonine glycan. S177 carries an O-linked (GalNAc...) serine glycan. O-linked (GalNAc...) threonine glycosylation is found at T181 and T189. The O-linked (GalNAc...) serine glycan is linked to S190. O-linked (GalNAc...) threonine glycosylation is found at T194 and T202. O-linked (GalNAc...) serine glycosylation is present at S203. 2 O-linked (GalNAc...) threonine glycosylation sites follow: T207 and T215. S216 carries O-linked (GalNAc...) serine glycosylation. T220 and T228 each carry an O-linked (GalNAc...) threonine glycan. Residue S229 is glycosylated (O-linked (GalNAc...) serine). 2 O-linked (GalNAc...) threonine glycosylation sites follow: T233 and T241. S242 carries O-linked (GalNAc...) serine glycosylation. Residues T246 and T254 are each glycosylated (O-linked (GalNAc...) threonine). An O-linked (GalNAc...) serine glycan is attached at S255. T259 and T267 each carry an O-linked (GalNAc...) threonine glycan. S268 carries O-linked (GalNAc...) serine glycosylation. 2 O-linked (GalNAc...) threonine glycosylation sites follow: T272 and T280. O-linked (GalNAc...) serine glycosylation is present at S281. T285 and T293 each carry an O-linked (GalNAc...) threonine glycan. O-linked (GalNAc...) serine glycosylation occurs at S294. Residues T298 and T306 are each glycosylated (O-linked (GalNAc...) threonine). O-linked (GalNAc...) serine glycosylation occurs at S307. Residues T311 and T319 are each glycosylated (O-linked (GalNAc...) threonine). S320 carries an O-linked (GalNAc...) serine glycan. Residues T324 and T332 are each glycosylated (O-linked (GalNAc...) threonine). A glycan (O-linked (GalNAc...) serine) is linked at S333. O-linked (GalNAc...) threonine glycosylation is found at T337 and T345. O-linked (GalNAc...) serine glycosylation is present at S346. 2 O-linked (GalNAc...) threonine glycosylation sites follow: T350 and T358. An O-linked (GalNAc...) serine glycan is attached at S359. T363 and T371 each carry an O-linked (GalNAc...) threonine glycan. Residue S372 is glycosylated (O-linked (GalNAc...) serine). T376 and T384 each carry an O-linked (GalNAc...) threonine glycan. A glycan (O-linked (GalNAc...) serine) is linked at S385. T389 and T397 each carry an O-linked (GalNAc...) threonine glycan. O-linked (GalNAc...) serine glycosylation occurs at S398. O-linked (GalNAc...) threonine glycosylation is found at T402 and T410. S411 carries O-linked (GalNAc...) serine glycosylation. O-linked (GalNAc...) threonine glycans are attached at residues T415 and T423. S424 carries an O-linked (GalNAc...) serine glycan. O-linked (GalNAc...) threonine glycosylation is found at T428 and T436. S437 carries O-linked (GalNAc...) serine glycosylation. O-linked (GalNAc...) threonine glycans are attached at residues T441 and T449. A glycan (O-linked (GalNAc...) serine) is linked at S450. 2 O-linked (GalNAc...) threonine glycosylation sites follow: T454 and T462. S463 is a glycosylation site (O-linked (GalNAc...) serine). T467 and T475 each carry an O-linked (GalNAc...) threonine glycan. S476 is a glycosylation site (O-linked (GalNAc...) serine). 2 O-linked (GalNAc...) threonine glycosylation sites follow: T480 and T488. Residue S489 is glycosylated (O-linked (GalNAc...) serine). 2 O-linked (GalNAc...) threonine glycosylation sites follow: T493 and T501. An O-linked (GalNAc...) serine glycan is attached at S502. T506 and T514 each carry an O-linked (GalNAc...) threonine glycan. The O-linked (GalNAc...) serine glycan is linked to S515. O-linked (GalNAc...) threonine glycosylation is found at T519 and T527. S528 carries O-linked (GalNAc...) serine glycosylation. T532 is a glycosylation site (O-linked (GalNAc...) threonine). A propeptide spanning residues 537–542 (DDAMDI) is cleaved from the precursor.

Post-translationally, most sialic acid residues exist in the form of polysialyl groups partly capped with deaminoneuraminic acid. Cortical alveoli of immature ovaries.

In terms of biological role, in response to egg activation, PSGP is discharged by exocytosis into the perivitelline space, where it undergoes rapid proteolysis into glycotridecapeptides. During fertilization and/or early development the glycotridecapeptides prevent polyspermy or are involved in the formation of a fertilization membrane. The sequence is that of Polysialoglycoprotein from Oncorhynchus mykiss (Rainbow trout).